The primary structure comprises 502 residues: UDP-glucuronosyltransferase 2C1 (502 aa).

N-linked (GlcNAc...) asparagine glycosylation is found at asparagine 177 and asparagine 288. A helical membrane pass occupies residues 466-481 (VVVFLLTCVATIIFLA).

It belongs to the UDP-glycosyltransferase family.

Its subcellular location is the microsome membrane. It localises to the endoplasmic reticulum membrane. It carries out the reaction glucuronate acceptor + UDP-alpha-D-glucuronate = acceptor beta-D-glucuronoside + UDP + H(+). UDPGT is of major importance in the conjugation and subsequent elimination of potentially toxic xenobiotics and endogenous compounds. The polypeptide is UDP-glucuronosyltransferase 2C1 (UGT2C1) (Oryctolagus cuniculus (Rabbit)).